The following is a 37-amino-acid chain: Large ribosomal subunit protein bL36c (37 aa).

This sequence belongs to the bacterial ribosomal protein bL36 family.

It is found in the plastid. It localises to the chloroplast. This is Large ribosomal subunit protein bL36c from Dioscorea elephantipes (Elephant's foot yam).